Here is a 153-residue protein sequence, read N- to C-terminus: Riboflavin synthase (153 aa).

The protein belongs to the DMRL synthase family. Homooligomer. Mg(2+) is required as a cofactor.

It carries out the reaction 2 6,7-dimethyl-8-(1-D-ribityl)lumazine + H(+) = 5-amino-6-(D-ribitylamino)uracil + riboflavin. The protein operates within cofactor biosynthesis; riboflavin biosynthesis; riboflavin from 2-hydroxy-3-oxobutyl phosphate and 5-amino-6-(D-ribitylamino)uracil: step 2/2. Its activity is regulated as follows. Inhibited by EDTA. In Methanothermobacter thermautotrophicus (strain ATCC 29096 / DSM 1053 / JCM 10044 / NBRC 100330 / Delta H) (Methanobacterium thermoautotrophicum), this protein is Riboflavin synthase (ribC).